The sequence spans 854 residues: Selenocysteine insertion sequence-binding protein 2 (854 aa).

Disordered regions lie at residues 332–351, 356–394, 417–445, and 488–619; these read ADPK…DPSY, HIIH…KYEV, ERRD…KKSQ, and ECAS…PNHT. 2 stretches are compositionally biased toward polar residues: residues 338 to 350 and 361 to 372; these read SIPS…SDPS and TQKSKASQGSDL. The Nuclear localization signal motif lies at 380-387; it reads KNKKKKEK. Positions 426–445 are enriched in polar residues; the sequence is KFQSKQQPQDNFKNNVKKSQ. The span at 536-547 shows a compositional bias: basic and acidic residues; the sequence is ILKERQERKQRL. Over residues 548-559 the composition is skewed to polar residues; the sequence is QENAVSPAFTSD. Positions 560–572 are enriched in acidic residues; it reads DTQDGESGGDDQF. A compositionally biased stretch (basic and acidic residues) spans 593–611; that stretch reads VEDKSEEPPGTELQRDTEA. An RNA-binding region spans residues 673-694; that stretch reads LVLGLREVLKHLKLKKLKCVII. Residues 787–812 form a disordered region; the sequence is EPRPQAPPSLPTQGPSCPAEDGPPAL.

Expressed at high levels in testis.

Its subcellular location is the nucleus. The protein localises to the mitochondrion. MRNA-binding protein that binds to the SECIS (selenocysteine insertion sequence) element present in the 3'-UTR of mRNAs encoding selenoproteins and facilitates the incorporation of the rare amino acid selenocysteine. Insertion of selenocysteine at UGA codons is mediated by SECISBP2 and EEFSEC: SECISBP2 (1) specifically binds the SECIS sequence once the 80S ribosome encounters an in-frame UGA codon and (2) contacts the RPS27A/eS31 of the 40S ribosome before ribosome stalling. (3) GTP-bound EEFSEC then delivers selenocysteinyl-tRNA(Sec) to the 80S ribosome and adopts a preaccommodated state conformation. (4) After GTP hydrolysis, EEFSEC dissociates from the assembly, selenocysteinyl-tRNA(Sec) accommodates, and peptide bond synthesis and selenoprotein elongation occur. This Homo sapiens (Human) protein is Selenocysteine insertion sequence-binding protein 2.